The following is a 673-amino-acid chain: DNA ligase (673 aa).

Residues 33-37, 82-83, and Glu-117 each bind NAD(+); these read DSVYD and SL. Residue Lys-119 is the N6-AMP-lysine intermediate of the active site. The NAD(+) site is built by Arg-140, Glu-177, Lys-295, and Lys-319. 4 residues coordinate Zn(2+): Cys-413, Cys-416, Cys-431, and Cys-436. A BRCT domain is found at 595–673; it reads AVSQVLAGKK…EAELLALDPK (79 aa).

Belongs to the NAD-dependent DNA ligase family. LigA subfamily. The cofactor is Mg(2+). Mn(2+) serves as cofactor.

The enzyme catalyses NAD(+) + (deoxyribonucleotide)n-3'-hydroxyl + 5'-phospho-(deoxyribonucleotide)m = (deoxyribonucleotide)n+m + AMP + beta-nicotinamide D-nucleotide.. In terms of biological role, DNA ligase that catalyzes the formation of phosphodiester linkages between 5'-phosphoryl and 3'-hydroxyl groups in double-stranded DNA using NAD as a coenzyme and as the energy source for the reaction. It is essential for DNA replication and repair of damaged DNA. This chain is DNA ligase, found in Synechococcus sp. (strain JA-3-3Ab) (Cyanobacteria bacterium Yellowstone A-Prime).